The following is a 346-amino-acid chain: Holliday junction branch migration complex subunit RuvB (346 aa).

Residues 1 to 182 (MSEPARLISP…FGIPVRLSFY (182 aa)) form a large ATPase domain (RuvB-L) region. Residues Leu-21, Arg-22, Gly-63, Lys-66, Thr-67, Thr-68, 129–131 (EDF), Arg-172, Tyr-182, and Arg-219 each bind ATP. Thr-67 contributes to the Mg(2+) binding site. The tract at residues 183–253 (TVEELELIVR…IADEALTRLL (71 aa)) is small ATPAse domain (RuvB-S). The segment at 256 to 346 (NVGFDQLDKR…AQFRLFQEDD (91 aa)) is head domain (RuvB-H). DNA contacts are provided by Arg-292, Arg-311, and Arg-316.

Belongs to the RuvB family. Homohexamer. Forms an RuvA(8)-RuvB(12)-Holliday junction (HJ) complex. HJ DNA is sandwiched between 2 RuvA tetramers; dsDNA enters through RuvA and exits via RuvB. An RuvB hexamer assembles on each DNA strand where it exits the tetramer. Each RuvB hexamer is contacted by two RuvA subunits (via domain III) on 2 adjacent RuvB subunits; this complex drives branch migration. In the full resolvosome a probable DNA-RuvA(4)-RuvB(12)-RuvC(2) complex forms which resolves the HJ.

It is found in the cytoplasm. The enzyme catalyses ATP + H2O = ADP + phosphate + H(+). Functionally, the RuvA-RuvB-RuvC complex processes Holliday junction (HJ) DNA during genetic recombination and DNA repair, while the RuvA-RuvB complex plays an important role in the rescue of blocked DNA replication forks via replication fork reversal (RFR). RuvA specifically binds to HJ cruciform DNA, conferring on it an open structure. The RuvB hexamer acts as an ATP-dependent pump, pulling dsDNA into and through the RuvAB complex. RuvB forms 2 homohexamers on either side of HJ DNA bound by 1 or 2 RuvA tetramers; 4 subunits per hexamer contact DNA at a time. Coordinated motions by a converter formed by DNA-disengaged RuvB subunits stimulates ATP hydrolysis and nucleotide exchange. Immobilization of the converter enables RuvB to convert the ATP-contained energy into a lever motion, pulling 2 nucleotides of DNA out of the RuvA tetramer per ATP hydrolyzed, thus driving DNA branch migration. The RuvB motors rotate together with the DNA substrate, which together with the progressing nucleotide cycle form the mechanistic basis for DNA recombination by continuous HJ branch migration. Branch migration allows RuvC to scan DNA until it finds its consensus sequence, where it cleaves and resolves cruciform DNA. The chain is Holliday junction branch migration complex subunit RuvB from Rhizobium etli (strain CIAT 652).